A 90-amino-acid chain; its full sequence is Small ribosomal subunit protein uS15c (90 aa).

The protein belongs to the universal ribosomal protein uS15 family. As to quaternary structure, part of the 30S ribosomal subunit.

It localises to the plastid. Its subcellular location is the chloroplast. This chain is Small ribosomal subunit protein uS15c (rps15), found in Mesostigma viride (Green alga).